The primary structure comprises 89 residues: UPF0237 protein CE1668 (89 aa).

The ACT domain occupies 4-78; the sequence is IMTVTGQDHT…KEQGLVIRIQ (75 aa).

This sequence belongs to the UPF0237 family.

This is UPF0237 protein CE1668 from Corynebacterium efficiens (strain DSM 44549 / YS-314 / AJ 12310 / JCM 11189 / NBRC 100395).